A 342-amino-acid chain; its full sequence is Anthranilate phosphoribosyltransferase (342 aa).

Residues Gly81, 84–85 (GD), Thr89, 91–94 (NVST), 109–117 (KHGNRAASS), and Ala121 each bind 5-phospho-alpha-D-ribose 1-diphosphate. Gly81 lines the anthranilate pocket. Ser93 contacts Mg(2+). Residue Asn112 coordinates anthranilate. Arg167 contributes to the anthranilate binding site. Positions 226 and 227 each coordinate Mg(2+).

It belongs to the anthranilate phosphoribosyltransferase family. Homodimer. Requires Mg(2+) as cofactor.

The enzyme catalyses N-(5-phospho-beta-D-ribosyl)anthranilate + diphosphate = 5-phospho-alpha-D-ribose 1-diphosphate + anthranilate. It participates in amino-acid biosynthesis; L-tryptophan biosynthesis; L-tryptophan from chorismate: step 2/5. Catalyzes the transfer of the phosphoribosyl group of 5-phosphorylribose-1-pyrophosphate (PRPP) to anthranilate to yield N-(5'-phosphoribosyl)-anthranilate (PRA). This is Anthranilate phosphoribosyltransferase from Beijerinckia indica subsp. indica (strain ATCC 9039 / DSM 1715 / NCIMB 8712).